The primary structure comprises 90 residues: Small ribosomal subunit protein uS15c (90 aa).

It belongs to the universal ribosomal protein uS15 family. Part of the 30S ribosomal subunit.

It localises to the plastid. Its subcellular location is the chloroplast. This chain is Small ribosomal subunit protein uS15c (rps15-A), found in Zea mays (Maize).